A 26-amino-acid chain; its full sequence is Alpha-amylase inhibitor 1 (26 aa).

The protein belongs to the protease inhibitor I6 (cereal trypsin/alpha-amylase inhibitor) family.

The protein localises to the secreted. In terms of biological role, alpha-amylase inhibitor. The polypeptide is Alpha-amylase inhibitor 1 (Saussurea costus (Costus)).